Consider the following 295-residue polypeptide: Inward rectifier potassium channel Kirbac3.1 (295 aa).

Topologically, residues 1–47 are cytoplasmic; that stretch reads MTGGMKPPARKPRILNSDGSSNITRLGLEKRGWLDDHYHDLLTVSWP. The helical transmembrane segment at 48–69 threads the bilayer; it reads VFITLITGLYLVTNALFALAYL. Topologically, residues 70–82 are extracellular; sequence ACGDVIENARPGS. The segment at residues 83 to 95 is an intramembrane region (helical; Pore-forming); sequence FTDAFFFSVQTMA. Positions 96–100 match the Selectivity filter motif; it reads TIGYG. Residues 107–131 traverse the membrane as a helical segment; the sequence is PLANTLVTLEALCGMLGLAVAASLI. Topologically, residues 132 to 295 are cytoplasmic; it reads YARFTRPTAG…DLGKFHEIAQ (164 aa).

This sequence belongs to the inward rectifier-type potassium channel (TC 1.A.2.1) family. KCNJ11 subfamily. In terms of assembly, homotetramer.

It is found in the membrane. Its function is as follows. Inward rectifier potassium channel that mediates potassium uptake into the cell. Inward rectifier potassium channels are characterized by a greater tendency to allow potassium to flow into the cell rather than out of it. The inward rectification may be achieved by the blockage of outward current by cytoplasmic divalent metal ions and polyamines. Complements an E.coli mutant that is defective in K(+) uptake. In Paramagnetospirillum magnetotacticum (Aquaspirillum magnetotacticum), this protein is Inward rectifier potassium channel Kirbac3.1.